Reading from the N-terminus, the 204-residue chain is Phosphoribosyl-dephospho-CoA transferase (204 aa).

Catalysis depends on residues D129 and D131.

The protein belongs to the MdcG family.

The catalysed reaction is apo-[malonate decarboxylase ACP] + 2'-(5''-triphospho-alpha-D-ribosyl)-3'-dephospho-CoA = holo-[malonate decarboxylase ACP] + diphosphate. Its function is as follows. Transfers 2'-(5-triphosphoribosyl)-3'-dephosphocoenzyme-A to the apo-[acyl-carrier-protein] of the malonate decarboxylase to yield holo-[acyl-carrier-protein]. The protein is Phosphoribosyl-dephospho-CoA transferase of Pseudomonas putida (strain GB-1).